Reading from the N-terminus, the 860-residue chain is Leucine--tRNA ligase (860 aa).

The 'HIGH' region motif lies at 42–52 (PYPSGRLHMGH). The 'KMSKS' region signature appears at 619-623 (KMSKS). Lys-622 provides a ligand contact to ATP.

It belongs to the class-I aminoacyl-tRNA synthetase family.

It is found in the cytoplasm. The enzyme catalyses tRNA(Leu) + L-leucine + ATP = L-leucyl-tRNA(Leu) + AMP + diphosphate. This is Leucine--tRNA ligase from Erwinia tasmaniensis (strain DSM 17950 / CFBP 7177 / CIP 109463 / NCPPB 4357 / Et1/99).